Here is a 232-residue protein sequence, read N- to C-terminus: Ubiquinone biosynthesis O-methyltransferase (232 aa).

Residues arginine 36, glycine 55, aspartate 76, and leucine 120 each coordinate S-adenosyl-L-methionine.

This sequence belongs to the methyltransferase superfamily. UbiG/COQ3 family.

It carries out the reaction a 3-demethylubiquinol + S-adenosyl-L-methionine = a ubiquinol + S-adenosyl-L-homocysteine + H(+). It catalyses the reaction a 3-(all-trans-polyprenyl)benzene-1,2-diol + S-adenosyl-L-methionine = a 2-methoxy-6-(all-trans-polyprenyl)phenol + S-adenosyl-L-homocysteine + H(+). The protein operates within cofactor biosynthesis; ubiquinone biosynthesis. Functionally, O-methyltransferase that catalyzes the 2 O-methylation steps in the ubiquinone biosynthetic pathway. The polypeptide is Ubiquinone biosynthesis O-methyltransferase (Pseudomonas entomophila (strain L48)).